The sequence spans 142 residues: Large ribosomal subunit protein uL13 (142 aa).

It belongs to the universal ribosomal protein uL13 family. In terms of assembly, part of the 50S ribosomal subunit.

Its function is as follows. This protein is one of the early assembly proteins of the 50S ribosomal subunit, although it is not seen to bind rRNA by itself. It is important during the early stages of 50S assembly. The polypeptide is Large ribosomal subunit protein uL13 (Xylella fastidiosa (strain 9a5c)).